Here is a 622-residue protein sequence, read N- to C-terminus: ATP-dependent lipid A-core flippase (622 aa).

A run of 5 helical transmembrane segments spans residues isoleucine 32–phenylalanine 52, valine 91–isoleucine 111, isoleucine 192–leucine 212, serine 286–tryptophan 306, and tyrosine 312–isoleucine 332. The ABC transmembrane type-1 domain occupies valine 33–threonine 344. The ABC transporter domain occupies phenylalanine 378–isoleucine 611. Glycine 410–serine 417 contacts ATP.

It belongs to the ABC transporter superfamily. Lipid exporter (TC 3.A.1.106) family. As to quaternary structure, homodimer.

Its subcellular location is the cell inner membrane. The enzyme catalyses ATP + H2O + lipid A-core oligosaccharideSide 1 = ADP + phosphate + lipid A-core oligosaccharideSide 2.. In terms of biological role, involved in lipopolysaccharide (LPS) biosynthesis. Translocates lipid A-core from the inner to the outer leaflet of the inner membrane. Transmembrane domains (TMD) form a pore in the inner membrane and the ATP-binding domain (NBD) is responsible for energy generation. The chain is ATP-dependent lipid A-core flippase from Neisseria gonorrhoeae (strain ATCC 700825 / FA 1090).